A 620-amino-acid polypeptide reads, in one-letter code: Chaperone protein HscA homolog (620 aa).

The protein belongs to the heat shock protein 70 family.

Its function is as follows. Chaperone involved in the maturation of iron-sulfur cluster-containing proteins. Has a low intrinsic ATPase activity which is markedly stimulated by HscB. This is Chaperone protein HscA homolog from Shewanella baltica (strain OS195).